The primary structure comprises 98 residues: UPF0251 protein Sbal_3699 (98 aa).

Belongs to the UPF0251 family.

The polypeptide is UPF0251 protein Sbal_3699 (Shewanella baltica (strain OS155 / ATCC BAA-1091)).